We begin with the raw amino-acid sequence, 327 residues long: Tryptophan--tRNA ligase (327 aa).

ATP contacts are provided by residues 9-11 (RPT) and 17-18 (GN). A 'HIGH' region motif is present at residues 10–18 (PTGNLHLGN). Aspartate 133 serves as a coordination point for L-tryptophan. ATP contacts are provided by residues 145-147 (GKD), valine 186, and 194-198 (KMGKS). A 'KMSKS' region motif is present at residues 194–198 (KMGKS).

It belongs to the class-I aminoacyl-tRNA synthetase family. In terms of assembly, homodimer.

The protein localises to the cytoplasm. The catalysed reaction is tRNA(Trp) + L-tryptophan + ATP = L-tryptophyl-tRNA(Trp) + AMP + diphosphate + H(+). Catalyzes the attachment of tryptophan to tRNA(Trp). In Porphyromonas gingivalis (strain ATCC BAA-308 / W83), this protein is Tryptophan--tRNA ligase.